We begin with the raw amino-acid sequence, 549 residues long: Chaperonin GroEL (549 aa).

ATP is bound by residues 30–33 (TLGP), lysine 51, 87–91 (DGTTT), glycine 415, and aspartate 496.

It belongs to the chaperonin (HSP60) family. Forms a cylinder of 14 subunits composed of two heptameric rings stacked back-to-back. Interacts with the co-chaperonin GroES.

The protein resides in the cytoplasm. The catalysed reaction is ATP + H2O + a folded polypeptide = ADP + phosphate + an unfolded polypeptide.. Its function is as follows. Together with its co-chaperonin GroES, plays an essential role in assisting protein folding. The GroEL-GroES system forms a nano-cage that allows encapsulation of the non-native substrate proteins and provides a physical environment optimized to promote and accelerate protein folding. The polypeptide is Chaperonin GroEL (Prosthecochloris aestuarii (strain DSM 271 / SK 413)).